The chain runs to 301 residues: GTPase Era (301 aa).

One can recognise an Era-type G domain in the interval 6 to 173 (KSGFVAIVGR…LEQTNANLEI (168 aa)). The segment at 14–21 (GRPNVGKS) is G1. 14–21 (GRPNVGKS) is a GTP binding site. The segment at 40-44 (QTTRN) is G2. The segment at 61-64 (DTPG) is G3. GTP-binding positions include 61-65 (DTPGI) and 123-126 (NKID). The G4 stretch occupies residues 123-126 (NKID). The tract at residues 152–154 (ISA) is G5. The 79-residue stretch at 204–282 (TREEVPHSVA…FLEIWVKVQK (79 aa)) folds into the KH type-2 domain.

The protein belongs to the TRAFAC class TrmE-Era-EngA-EngB-Septin-like GTPase superfamily. Era GTPase family. Monomer.

Its subcellular location is the cytoplasm. It is found in the cell membrane. An essential GTPase that binds both GDP and GTP, with rapid nucleotide exchange. Plays a role in 16S rRNA processing and 30S ribosomal subunit biogenesis and possibly also in cell cycle regulation and energy metabolism. The polypeptide is GTPase Era (Listeria monocytogenes serotype 4b (strain F2365)).